We begin with the raw amino-acid sequence, 373 residues long: Ferroptosis suppressor protein 1 (373 aa).

Glycine 2 is lipidated: N-myristoyl glycine. Residues 13 to 29 (VVVVGGGFGGTAAASLL) traverse the membrane as a helical segment. 6-hydroxy-FAD contacts are provided by residues 17–21 (GGGFG), arginine 53, and valine 81. N6-acetyllysine is present on lysine 167. Aspartate 284 serves as a coordination point for 6-hydroxy-FAD.

It belongs to the FAD-dependent oxidoreductase family. 6-hydroxy-FAD serves as cofactor. In terms of processing, N-myristoylation at Gly-2 mediates the recruitment to lipid droplets and plasma membrane. Acetylation at Lys-167 prevents AIFM2 ubiquitination and degradation, thereby inhibiting ferroptosis. KAT2B mediates acetylation at Lys-167, while HDAC3 removes it. Post-translationally, ubiquitinated. AIFM2 undergoes 'Lys-29'-ubiquitination and proteasomal degradation, which is inhibited by acetylation at Lys-167.

It is found in the lipid droplet. It localises to the cell membrane. Its subcellular location is the cytoplasm. The protein resides in the mitochondrion membrane. The protein localises to the nucleus. It catalyses the reaction ubiquinone-10 + NADH + H(+) = ubiquinol-10 + NAD(+). The catalysed reaction is phylloquinone + NADH + H(+) = phylloquinol + NAD(+). The enzyme catalyses menaquinone-4 + NADH + H(+) = menaquinol-4 + NAD(+). It carries out the reaction menadione + NADH + H(+) = menadiol + NAD(+). The modification by 4-hydroxy-2-nonenal (HNE) adduction in mitochondria results in loss of the oxidoreductase activity and activation of a novel function in mitochondrial oxidative stress signaling. An NAD(P)H-dependent oxidoreductase that acts as a key inhibitor of ferroptosis. At the plasma membrane, catalyzes reduction of coenzyme Q/ubiquinone-10 to ubiquinol-10, a lipophilic radical-trapping antioxidant that prevents lipid oxidative damage and consequently ferroptosis. Acts in parallel to GPX4 to suppress phospholipid peroxidation and ferroptosis. This anti-ferroptotic function is independent of cellular glutathione levels. Also acts as a potent radical-trapping antioxidant by mediating warfarin-resistant vitamin K reduction in the canonical vitamin K cycle: catalyzes NAD(P)H-dependent reduction of vitamin K (phylloquinone, menaquinone-4 and menadione) to hydroquinone forms. Hydroquinones act as potent radical-trapping antioxidants inhibitor of phospholipid peroxidation and ferroptosis. May play a role in mitochondrial stress signaling. Upon oxidative stress, associates with the lipid peroxidation end product 4-hydroxy-2-nonenal (HNE) forming a lipid adduct devoid of oxidoreductase activity, which then translocates from mitochondria into the nucleus triggering DNA damage and cell death. This chain is Ferroptosis suppressor protein 1 (AIFM2), found in Taeniopygia guttata (Zebra finch).